Consider the following 197-residue polypeptide: MYDYIKGIYKGMHKDYITVENNGIGYKIFTSGNTLYETPEKDEEIKLYIQQIPRDDSINLYGFFTEEERDMFNLLMTISGVGAKSSLSLLSVTSINKLKYSIVTEDTTLLTRAPGIGRKTAERIILELKDKFKNDDIISDIDDLDSISNFQLHSAEALEALMSLGYSQKESEKALKNVDKENSLEDIIKACLKYLMG.

The tract at residues M1–F64 is domain I. The domain II stretch occupies residues T65–D143. The segment at L144 to S154 is flexible linker. Residues S154–G197 form a domain III region.

It belongs to the RuvA family. Homotetramer. Forms an RuvA(8)-RuvB(12)-Holliday junction (HJ) complex. HJ DNA is sandwiched between 2 RuvA tetramers; dsDNA enters through RuvA and exits via RuvB. An RuvB hexamer assembles on each DNA strand where it exits the tetramer. Each RuvB hexamer is contacted by two RuvA subunits (via domain III) on 2 adjacent RuvB subunits; this complex drives branch migration. In the full resolvosome a probable DNA-RuvA(4)-RuvB(12)-RuvC(2) complex forms which resolves the HJ.

The protein localises to the cytoplasm. The RuvA-RuvB-RuvC complex processes Holliday junction (HJ) DNA during genetic recombination and DNA repair, while the RuvA-RuvB complex plays an important role in the rescue of blocked DNA replication forks via replication fork reversal (RFR). RuvA specifically binds to HJ cruciform DNA, conferring on it an open structure. The RuvB hexamer acts as an ATP-dependent pump, pulling dsDNA into and through the RuvAB complex. HJ branch migration allows RuvC to scan DNA until it finds its consensus sequence, where it cleaves and resolves the cruciform DNA. The sequence is that of Holliday junction branch migration complex subunit RuvA from Clostridium tetani (strain Massachusetts / E88).